A 1133-amino-acid polypeptide reads, in one-letter code: SH3 and PX domain-containing protein 2A (1133 aa).

The PX domain maps to 4 to 128; sequence YCVQDATVVD…RFFEARPEDV (125 aa). Residues 166 to 225 enclose the SH3 1 domain; the sequence is MILEQYVVVSNYKKQENSELSLQAGEVVDVIEKNESGWWFVSTSEEQGWVPATYLEAQNG. A Phosphothreonine modification is found at threonine 256. One can recognise an SH3 2 domain in the interval 266-325; it reads SREEKYVTVQPYTSQSKDEIGFEKGVTVEVIRKNLEGWWYIRYLGKEGWAPASYLKKAKD. Serine 406 and serine 421 each carry phosphoserine. 4 disordered regions span residues 415–446, 505–840, 899–924, and 941–964; these read QRAQ…PPEP, RKKP…EWEG, NEQP…GKSD, and QSKK…SGTP. The SH3 3 domain maps to 448–507; the sequence is SVEVEYYTIAEFQSCISDGISFRGGQKAEVIDKNSGGWWYVQIGEKEGWAPASYIDKRKK. Positions 546-555 are enriched in basic and acidic residues; that stretch reads DSPRKLKYEE. 2 positions are modified to phosphoserine: serine 547 and serine 567. The span at 567 to 576 shows a compositional bias: acidic residues; sequence SEPELSEEPV. Residues 577–586 are compositionally biased toward basic and acidic residues; that stretch reads EDRASGERRP. Serine 593 is modified (phosphoserine). The segment covering 608 to 620 has biased composition (acidic residues); sequence SSEDVALEEETIY. 3 stretches are compositionally biased toward low complexity: residues 634 to 652, 658 to 670, and 686 to 715; these read SARG…SLSL, PKSG…SLLK, and SSAS…SKTS. Serine 644 bears the Phosphoserine mark. Threonine 731 is modified (phosphothreonine). Phosphoserine is present on residues serine 767, serine 769, and serine 819. Threonine 829 carries the post-translational modification Phosphothreonine. The region spanning 840 to 899 is the SH3 4 domain; it reads GPATSYMTCSAYQKVQDSEISFPAGVEVQVLEKQESGWWYVRFGELEGWAPSHYLVLDEN. The stretch at 917–946 forms a coiled coil; that stretch reads RQNEGKSDSLEKIERRVQALNTVNQSKKAT. 4 positions are modified to phosphoserine: serine 1002, serine 1016, serine 1017, and serine 1038. The interval 1029–1059 is disordered; the sequence is KGRLAERAASQGSDSPLLPAQRNSIPVSPVR. The SH3 5 domain maps to 1072–1133; sequence NLKDVYVSIA…VPSNYLEKKN (62 aa).

Belongs to the SH3PXD2 family. In terms of assembly, interacts (via N-terminus) with CYBA. Interacts with ADAM12, ADAM15 and ADAM19. Interacts with NOXO1. Interacts (via SH3 domains) with NOXA1. Interacts with FASLG. Interacts (via PX domain) with RAB40B (GTP-bound); interaction promotes invadopodia-mediated extracellular matrix degradation. Post-translationally, tyrosine phosphorylated by SRC. Phosphorylation plays a regulatory role in the protein localization. The intramolecular interaction of the PX domain with the third SH3 domain maintains the protein in the cytoplasm and phosphorylation disrupts this interaction, resulting in the redistribution of the protein from cytoplasm to the perimembrane region. Phosphorylated on serine upon DNA damage, probably by ATM or ATR. In terms of tissue distribution, found in several cancer cell lines, particularly invasive breast carcinomas and melanomas.

Its subcellular location is the cytoplasm. It is found in the cell projection. It localises to the podosome. In terms of biological role, adapter protein involved in invadopodia and podosome formation, extracellular matrix degradation and invasiveness of some cancer cells. Binds matrix metalloproteinases (ADAMs), NADPH oxidases (NOXs) and phosphoinositides. Acts as an organizer protein that allows NOX1- or NOX3-dependent reactive oxygen species (ROS) generation and ROS localization. In association with ADAM12, mediates the neurotoxic effect of amyloid-beta peptide. This Homo sapiens (Human) protein is SH3 and PX domain-containing protein 2A.